We begin with the raw amino-acid sequence, 552 residues long: MATEGLLSAETDQDVARFLANFPPTEWGYSFASLLPQDSEFESHTKELDLVKEKVKDMLMQSRKELTENIEFVNCLCRLGVSYHFESEIIEQLSHIFISLPKILEENDYSLYILTLLFRVLRQHGYKMPCDVFNKFKDSNGEFKKCMTADVRGLLSLYEATFLSVHGEDILDEALAFTRQHLETLAEKSSPHLARHIRNALHLPFHHAPERLEILQYICFYEGEKSMNETLLKFAKLDFNRLQLLYRKELGLLSRWWKDINLTEKLPYTRDRIVEAYAWAAGIIIDPQFSRARLQFAKHLILISVMDDTYDSYGTFDELKHFTAALQRFTFEPTIELPEYMKFLYNILWNFFQETEKDETQGCACKTSFAREMLKELARSYFAEAEWYNDGVLPTFDEFMQFGLVSSTFDYHASAFFLGVEDLGMKEFIWLRDNPTIAKTAKLFGRLFNDIAIREDEQKKGDYPSAIKCYMNDHDVSLEKAKEDILKMLEDGWKDMNEELMKPTTVPKILTKFSINFVRMSDFTYRGGIDKYTCGTELKEFVKKLTIFPLQI.

Positions 307, 311, and 457 each coordinate Mg(2+). The DDXXD motif motif lies at 307-311; it reads DDTYD.

It belongs to the terpene synthase family. Mg(2+) is required as a cofactor.

Functionally, catalyzes the cyclization of farnesyl diphosphate to multiple sesquiterpenes, such as olefins and sesquiterpene alcohols. The protein is Terpene synthase 5 (TPS5) of Ricinus communis (Castor bean).